Reading from the N-terminus, the 135-residue chain is Small ribosomal subunit protein uS12 (135 aa).

The segment at 1–20 (MPTINQLVRKGRHSKVTKSK) is disordered. Positions 9–18 (RKGRHSKVTK) are enriched in basic residues.

The protein belongs to the universal ribosomal protein uS12 family. In terms of assembly, part of the 30S ribosomal subunit. Contacts proteins S8 and S17. May interact with IF1 in the 30S initiation complex.

Functionally, with S4 and S5 plays an important role in translational accuracy. In terms of biological role, interacts with and stabilizes bases of the 16S rRNA that are involved in tRNA selection in the A site and with the mRNA backbone. Located at the interface of the 30S and 50S subunits, it traverses the body of the 30S subunit contacting proteins on the other side and probably holding the rRNA structure together. The combined cluster of proteins S8, S12 and S17 appears to hold together the shoulder and platform of the 30S subunit. In Lactobacillus acidophilus (strain ATCC 700396 / NCK56 / N2 / NCFM), this protein is Small ribosomal subunit protein uS12.